Consider the following 255-residue polypeptide: Pyridoxine 5'-phosphate synthase (255 aa).

The 3-amino-2-oxopropyl phosphate site is built by Asn-8 and Arg-19. His-44 acts as the Proton acceptor in catalysis. The 1-deoxy-D-xylulose 5-phosphate site is built by Arg-46 and His-51. The active-site Proton acceptor is Glu-74. Thr-111 is a 1-deoxy-D-xylulose 5-phosphate binding site. Catalysis depends on His-202, which acts as the Proton donor. 3-amino-2-oxopropyl phosphate is bound by residues Asp-203 and 225–226; that span reads GH.

It belongs to the PNP synthase family. In terms of assembly, homooctamer; tetramer of dimers.

The protein resides in the cytoplasm. The enzyme catalyses 3-amino-2-oxopropyl phosphate + 1-deoxy-D-xylulose 5-phosphate = pyridoxine 5'-phosphate + phosphate + 2 H2O + H(+). It functions in the pathway cofactor biosynthesis; pyridoxine 5'-phosphate biosynthesis; pyridoxine 5'-phosphate from D-erythrose 4-phosphate: step 5/5. Functionally, catalyzes the complicated ring closure reaction between the two acyclic compounds 1-deoxy-D-xylulose-5-phosphate (DXP) and 3-amino-2-oxopropyl phosphate (1-amino-acetone-3-phosphate or AAP) to form pyridoxine 5'-phosphate (PNP) and inorganic phosphate. This chain is Pyridoxine 5'-phosphate synthase, found in Xanthomonas oryzae pv. oryzae (strain MAFF 311018).